A 60-amino-acid chain; its full sequence is DNA-directed RNA polymerase subunit Rpo6 (60 aa).

This sequence belongs to the archaeal Rpo6/eukaryotic RPB6 RNA polymerase subunit family. Part of the RNA polymerase complex.

It localises to the cytoplasm. The catalysed reaction is RNA(n) + a ribonucleoside 5'-triphosphate = RNA(n+1) + diphosphate. DNA-dependent RNA polymerase (RNAP) catalyzes the transcription of DNA into RNA using the four ribonucleoside triphosphates as substrates. In Methanosarcina acetivorans (strain ATCC 35395 / DSM 2834 / JCM 12185 / C2A), this protein is DNA-directed RNA polymerase subunit Rpo6.